The sequence spans 245 residues: 1-acyl-sn-glycerol-3-phosphate acyltransferase (245 aa).

Met1 bears the N-formylmethionine mark. The HXXXXD motif signature appears at 73–78 (HQNNYD).

This sequence belongs to the 1-acyl-sn-glycerol-3-phosphate acyltransferase family.

Its subcellular location is the cell inner membrane. The enzyme catalyses a 1-acyl-sn-glycero-3-phosphate + an acyl-CoA = a 1,2-diacyl-sn-glycero-3-phosphate + CoA. It catalyses the reaction a fatty acyl-[ACP] + a 1-acyl-sn-glycero-3-phosphate = a 1,2-diacyl-sn-glycero-3-phosphate + holo-[ACP]. It functions in the pathway phospholipid metabolism; CDP-diacylglycerol biosynthesis; CDP-diacylglycerol from sn-glycerol 3-phosphate: step 2/3. Its function is as follows. Converts lysophosphatidic acid (LPA) into phosphatidic acid by incorporating an acyl moiety at the 2 position. This enzyme can utilize either acyl-CoA or acyl-ACP as the fatty acyl donor. In Escherichia coli (strain K12), this protein is 1-acyl-sn-glycerol-3-phosphate acyltransferase (plsC).